Reading from the N-terminus, the 966-residue chain is MSSATSPIILKWDPKSLEIRTLTVESLLEPLVTQVTTLVNTSNKGPSGKKKGRSKKAHVLAASVEQATQNFLEKGEQIAKESQDLKEELISAVEDVRKQGDTMRITSSEFADDPCSSVKRGTMVRAARALLSAVTRLLILADMADVMRLLIHLKIVEEALESVKNATNEQDLAHRFKEFGKEMVKLNYVAARRQQELKDPHCRDEMAAARGALKKNATMLYTASQAFLRHPDVAATRANRDYVFKQVQEAIAGIANAAQATSPTDEKQAHTGIGELAAALNEFDNKIILDPLTFSEARFRPSLEEKLESIISGAALMADSSCTRDDRRERIVAECNSVRQALQDLLSEYMNNCRYGTWMDESCKSGRKEKGDPLNIAIDKMTKKTRDLRRQLRKAVMDHISDSFLETNVPLLVLIEAAKNGNEKEVKEYAQVFREHANKLVEVANLACSISNNEEGVKLVRMAATQIDSLCPQVINAALTLAARPQSKVAQDNMDVFKDQWEKQVRVLTEAVDDITSVDDFLSVSENHILEDVNKCVIALQEGDVDTLDRTAGAIRGRAARVIHIINAEMENYEAGVYTEKVLDATKLLCETVMPRFAEQVEFAIEALSANIPQPFEENEFIDASRLVYDGVRDIRKAVLMIRTPEELEDDSDFEQEDYDVRSRTSVQTEDDQLIAGQSARAIMAQLPQEEKAKIAEQVEIFHQEKSKLDAEVAKWDDSGNDIIVLAKQMCMIMMEMTDFTRGKGPLKNTSDVINAAKKIAEAGSRMDKLARAVADQCPDSACKQDLIAYLQRIALYCHQLNICSKVKAEVQNLGGELIVSGTAVQSTFTTFYEVAGDVIAGGRDSQLSLDLLPSCTEGSLFGSGSRDSTMLDSATSLIQAAKNLMNAVVLTVKASYVASTKYQKVYGTAAVNSPVVSWKMKAPEKKPLVKREKPEEYQTRVRRGSQKKHISPVQALSEFKAMDSF.

Over residues 924 to 940 (PEKKPLVKREKPEEYQT) the composition is skewed to basic and acidic residues. The tract at residues 924-952 (PEKKPLVKREKPEEYQTRVRRGSQKKHIS) is disordered. A compositionally biased stretch (basic residues) spans 941–951 (RVRRGSQKKHI).

It belongs to the vinculin/alpha-catenin family.

The protein resides in the cell membrane. Its subcellular location is the cytoplasm. It localises to the cytoskeleton. It is found in the cell junction. The protein localises to the adherens junction. The protein resides in the cell projection. Its subcellular location is the axon. It localises to the nucleus. In terms of biological role, may function as a linker between cadherin adhesion receptors and the cytoskeleton to regulate cell-cell adhesion and differentiation in the nervous system. The chain is Catenin alpha-2 (ctnna2) from Xenopus tropicalis (Western clawed frog).